The primary structure comprises 374 residues: Inner membrane transport permease YhhJ (374 aa).

Over Met1–Lys22 the chain is Cytoplasmic. The chain crosses the membrane as a helical span at residues Ala23–Thr43. The Periplasmic segment spans residues Pro44–Asp172. Residues Asn133 to Thr369 enclose the ABC transmembrane type-2 domain. The helical transmembrane segment at Pro173–Leu193 threads the bilayer. The Cytoplasmic portion of the chain corresponds to Thr194 to Gly229. A helical transmembrane segment spans residues Leu230 to Val250. At Pro251 to Ser255 the chain is on the periplasmic side. The chain crosses the membrane as a helical span at residues Ile256–Phe276. Residues Met277–Ser283 lie on the Cytoplasmic side of the membrane. Residues Met284–Gly304 form a helical membrane-spanning segment. At Ser305–Glu342 the chain is on the periplasmic side. A helical transmembrane segment spans residues Ile343 to Leu363. The Cytoplasmic segment spans residues Leu364–Ala374.

The protein belongs to the ABC-2 integral membrane protein family.

It localises to the cell inner membrane. In Escherichia coli (strain K12), this protein is Inner membrane transport permease YhhJ (yhhJ).